A 549-amino-acid polypeptide reads, in one-letter code: Siroheme synthase (549 aa).

Residues 1–203 are precorrin-2 dehydrogenase /sirohydrochlorin ferrochelatase; it reads MNTFPLFFKL…GNENEALAQL (203 aa). Residues 22 to 23 and 43 to 44 contribute to the NAD(+) site; these read DV and PS. S128 bears the Phosphoserine mark. A uroporphyrinogen-III C-methyltransferase region spans residues 247–549; sequence GEVYIVGAGP…DGDLEQLIIG (303 aa). An S-adenosyl-L-methionine-binding site is contributed by P256. D279 (proton acceptor) is an active-site residue. Residue K301 is the Proton donor of the active site. S-adenosyl-L-methionine is bound by residues 332-334, I337, 362-363, M414, and A443; these read GGD and TA.

This sequence in the N-terminal section; belongs to the precorrin-2 dehydrogenase / sirohydrochlorin ferrochelatase family. In the C-terminal section; belongs to the precorrin methyltransferase family.

The enzyme catalyses uroporphyrinogen III + 2 S-adenosyl-L-methionine = precorrin-2 + 2 S-adenosyl-L-homocysteine + H(+). The catalysed reaction is precorrin-2 + NAD(+) = sirohydrochlorin + NADH + 2 H(+). It catalyses the reaction siroheme + 2 H(+) = sirohydrochlorin + Fe(2+). It participates in cofactor biosynthesis; adenosylcobalamin biosynthesis; precorrin-2 from uroporphyrinogen III: step 1/1. The protein operates within cofactor biosynthesis; adenosylcobalamin biosynthesis; sirohydrochlorin from precorrin-2: step 1/1. Its pathway is porphyrin-containing compound metabolism; siroheme biosynthesis; precorrin-2 from uroporphyrinogen III: step 1/1. It functions in the pathway porphyrin-containing compound metabolism; siroheme biosynthesis; siroheme from sirohydrochlorin: step 1/1. It participates in porphyrin-containing compound metabolism; siroheme biosynthesis; sirohydrochlorin from precorrin-2: step 1/1. Multifunctional enzyme that catalyzes the SAM-dependent methylations of uroporphyrinogen III at position C-2 and C-7 to form precorrin-2 via precorrin-1. Then it catalyzes the NAD-dependent ring dehydrogenation of precorrin-2 to yield sirohydrochlorin. Finally, it catalyzes the ferrochelation of sirohydrochlorin to yield siroheme. The chain is Siroheme synthase from Psychrobacter arcticus (strain DSM 17307 / VKM B-2377 / 273-4).